Here is a 120-residue protein sequence, read N- to C-terminus: Flagellar protein FliT (120 aa).

The tract at residues 1–50 (MNDSSLSLKKWHALSALSNTMLSLAQSGKWDELIEQEVAYVSLVEKISIT) is required for homodimerization. Positions 59-97 (IQDQAMVMLNNVLQNEMTLKTLLQERMDELHGLMAQTGK) are fliD binding.

Belongs to the FliT family. As to quaternary structure, homodimer. Interacts with FliD and FlhC.

The protein localises to the cytoplasm. It is found in the cytosol. Dual-function protein that regulates the transcription of class 2 flagellar operons and that also acts as an export chaperone for the filament-capping protein FliD. As a transcriptional regulator, acts as an anti-FlhDC factor; it directly binds FlhC, thus inhibiting the binding of the FlhC/FlhD complex to class 2 promoters, resulting in decreased expression of class 2 flagellar operons. As a chaperone, effects FliD transition to the membrane by preventing its premature polymerization, and by directing it to the export apparatus. The protein is Flagellar protein FliT of Enterobacter sp. (strain 638).